The chain runs to 119 residues: Ribonuclease P protein component (119 aa).

Belongs to the RnpA family. As to quaternary structure, consists of a catalytic RNA component (M1 or rnpB) and a protein subunit.

It catalyses the reaction Endonucleolytic cleavage of RNA, removing 5'-extranucleotides from tRNA precursor.. In terms of biological role, RNaseP catalyzes the removal of the 5'-leader sequence from pre-tRNA to produce the mature 5'-terminus. It can also cleave other RNA substrates such as 4.5S RNA. The protein component plays an auxiliary but essential role in vivo by binding to the 5'-leader sequence and broadening the substrate specificity of the ribozyme. This is Ribonuclease P protein component from Listeria innocua serovar 6a (strain ATCC BAA-680 / CLIP 11262).